The following is a 135-amino-acid chain: MQTYLFASGLVLFLLGLVTGLLVPVSKNPRMGVAGHLQGMTNGPLLIIAGLLWPYLELPDAWQLATFWLLIYGTYANWLGVQLAALWGAGAKLAPIAAGEHRSTPLKERVVTFLLFSLIPAMFAAPIILLIGILR.

4 helical membrane-spanning segments follow: residues 5-25 (LFAS…LVPV), 33-55 (VAGH…LWPY), 67-87 (FWLL…AALW), and 113-133 (FLLF…LIGI).

The protein localises to the cell membrane. The enzyme catalyses N-phenylhydroxylamine = 2-aminophenol. In terms of biological role, catalyzes the rearrangement of hydroxylaminobenzene to 2-aminophenol. Involved in the degradation of nitrobenzene. In Ectopseudomonas oleovorans (Pseudomonas oleovorans), this protein is Hydroxylaminobenzene mutase HabA (habA).